The sequence spans 122 residues: Cysteine proteinase inhibitor 5 (122 aa).

Positions 1–26 are cleaved as a signal peptide; that stretch reads MTSKVVFLLLLSLVVVLLPLYASAAA. In terms of domain architecture, Cystatin spans 29 to 117; sequence GGWSPISNVT…RNLTSFEPAN (89 aa). N-linked (GlcNAc...) asparagine glycosylation occurs at asparagine 36. Residues 72–76 carry the Secondary area of contact motif; it reads QVVSG. N-linked (GlcNAc...) asparagine glycosylation is present at asparagine 109.

Belongs to the cystatin family. Phytocystatin subfamily.

The protein localises to the secreted. Specific inhibitor of cysteine proteinases. Probably involved in the regulation of endogenous processes and in defense against pests and pathogens. This chain is Cysteine proteinase inhibitor 5 (CYS5), found in Arabidopsis thaliana (Mouse-ear cress).